A 363-amino-acid chain; its full sequence is Cytoplasmic tRNA 2-thiolation protein 1 (363 aa).

The tract at residues 340 to 363 is disordered; it reads ASLNGTPRTPPTPAEPVEGIERAA.

Belongs to the TtcA family. CTU1/NCS6/ATPBD3 subfamily.

Its subcellular location is the cytoplasm. Its pathway is tRNA modification; 5-methoxycarbonylmethyl-2-thiouridine-tRNA biosynthesis. In terms of biological role, plays a central role in 2-thiolation of mcm(5)S(2)U at tRNA wobble positions of tRNA(Lys), tRNA(Glu) and tRNA(Gln). Directly binds tRNAs and probably acts by catalyzing adenylation of tRNAs, an intermediate required for 2-thiolation. It is unclear whether it acts as a sulfurtransferase that transfers sulfur from thiocarboxylated URM1 onto the uridine of tRNAs at wobble position. Prior mcm(5) tRNA modification by the elongator complex is required for 2-thiolation. May also be involved in protein urmylation. This chain is Cytoplasmic tRNA 2-thiolation protein 1, found in Cryptococcus neoformans var. neoformans serotype D (strain B-3501A) (Filobasidiella neoformans).